The chain runs to 71 residues: Pseudonajatoxin b (71 aa).

Intrachain disulfides connect Cys-3–Cys-21, Cys-14–Cys-42, Cys-27–Cys-31, Cys-46–Cys-58, and Cys-59–Cys-64.

It belongs to the three-finger toxin family. Long-chain subfamily. Type II alpha-neurotoxin sub-subfamily. In terms of tissue distribution, expressed by the venom gland.

It is found in the secreted. Functionally, binds with high affinity to muscular (alpha-1/CHRNA1) and neuronal (alpha-7/CHRNA7) nicotinic acetylcholine receptor (nAChR) and inhibits acetylcholine from binding to the receptor, thereby impairing neuromuscular and neuronal transmission. This is Pseudonajatoxin b from Pseudonaja textilis (Eastern brown snake).